Reading from the N-terminus, the 211-residue chain is Thymidylate kinase (211 aa).

An ATP-binding site is contributed by 10–17; the sequence is GLDGSGKT.

The protein belongs to the thymidylate kinase family.

The catalysed reaction is dTMP + ATP = dTDP + ADP. Its function is as follows. Phosphorylation of dTMP to form dTDP in both de novo and salvage pathways of dTTP synthesis. This is Thymidylate kinase from Blochmanniella floridana.